Here is a 389-residue protein sequence, read N- to C-terminus: Capreomycidine synthase (389 aa).

Position 230 is an N6-(pyridoxal phosphate)lysine (Lys-230).

The protein belongs to the class-II pyridoxal-phosphate-dependent aminotransferase family. Requires pyridoxal 5'-phosphate as cofactor.

It carries out the reaction (2S,3S)-hydroxyarginine = (2S,3R)-capreomycidine + H2O. It participates in antibiotic biosynthesis. In terms of biological role, involved in the biosynthesis of capreomycidine, an unusual amino acid used by non-ribosomal peptide synthases (NRPS) to make the tuberactinomycin class of peptide antibiotic such as viomycin and capreomycin. Catalyzes the dehydration of the C3 hydroxyl of (3S)-hydroxy-(2S)-arginine and the intramolecular cyclization to yield (2S,3R)-capreomycidine. The protein is Capreomycidine synthase of Streptomyces vinaceus.